Reading from the N-terminus, the 367-residue chain is Holliday junction branch migration complex subunit RuvB (367 aa).

The interval 2–196 (TDEPLTDRPP…FGFTARLDFY (195 aa)) is large ATPase domain (RuvB-L). ATP-binding positions include leucine 35, arginine 36, glycine 77, lysine 80, threonine 81, threonine 82, 143 to 145 (EDF), arginine 186, tyrosine 196, and arginine 233. Position 81 (threonine 81) interacts with Mg(2+). Positions 197 to 267 (EPADLERIVH…VAQAALAVYE (71 aa)) are small ATPAse domain (RuvB-S). Residues 270–367 (EHGLDRLDRA…IDRDAGEPTA (98 aa)) form a head domain (RuvB-H) region. Positions 325 and 330 each coordinate DNA.

It belongs to the RuvB family. As to quaternary structure, homohexamer. Forms an RuvA(8)-RuvB(12)-Holliday junction (HJ) complex. HJ DNA is sandwiched between 2 RuvA tetramers; dsDNA enters through RuvA and exits via RuvB. An RuvB hexamer assembles on each DNA strand where it exits the tetramer. Each RuvB hexamer is contacted by two RuvA subunits (via domain III) on 2 adjacent RuvB subunits; this complex drives branch migration. In the full resolvosome a probable DNA-RuvA(4)-RuvB(12)-RuvC(2) complex forms which resolves the HJ.

It localises to the cytoplasm. The catalysed reaction is ATP + H2O = ADP + phosphate + H(+). Its function is as follows. The RuvA-RuvB-RuvC complex processes Holliday junction (HJ) DNA during genetic recombination and DNA repair, while the RuvA-RuvB complex plays an important role in the rescue of blocked DNA replication forks via replication fork reversal (RFR). RuvA specifically binds to HJ cruciform DNA, conferring on it an open structure. The RuvB hexamer acts as an ATP-dependent pump, pulling dsDNA into and through the RuvAB complex. RuvB forms 2 homohexamers on either side of HJ DNA bound by 1 or 2 RuvA tetramers; 4 subunits per hexamer contact DNA at a time. Coordinated motions by a converter formed by DNA-disengaged RuvB subunits stimulates ATP hydrolysis and nucleotide exchange. Immobilization of the converter enables RuvB to convert the ATP-contained energy into a lever motion, pulling 2 nucleotides of DNA out of the RuvA tetramer per ATP hydrolyzed, thus driving DNA branch migration. The RuvB motors rotate together with the DNA substrate, which together with the progressing nucleotide cycle form the mechanistic basis for DNA recombination by continuous HJ branch migration. Branch migration allows RuvC to scan DNA until it finds its consensus sequence, where it cleaves and resolves cruciform DNA. The polypeptide is Holliday junction branch migration complex subunit RuvB (Acidothermus cellulolyticus (strain ATCC 43068 / DSM 8971 / 11B)).